A 436-amino-acid chain; its full sequence is Methylenetetrahydrofolate--tRNA-(uracil-5-)-methyltransferase TrmFO (436 aa).

9 to 14 (GAGLAG) serves as a coordination point for FAD.

Belongs to the MnmG family. TrmFO subfamily. The cofactor is FAD.

Its subcellular location is the cytoplasm. The enzyme catalyses uridine(54) in tRNA + (6R)-5,10-methylene-5,6,7,8-tetrahydrofolate + NADH + H(+) = 5-methyluridine(54) in tRNA + (6S)-5,6,7,8-tetrahydrofolate + NAD(+). It catalyses the reaction uridine(54) in tRNA + (6R)-5,10-methylene-5,6,7,8-tetrahydrofolate + NADPH + H(+) = 5-methyluridine(54) in tRNA + (6S)-5,6,7,8-tetrahydrofolate + NADP(+). Catalyzes the folate-dependent formation of 5-methyl-uridine at position 54 (M-5-U54) in all tRNAs. The chain is Methylenetetrahydrofolate--tRNA-(uracil-5-)-methyltransferase TrmFO from Ligilactobacillus salivarius (strain UCC118) (Lactobacillus salivarius).